The chain runs to 136 residues: Large ribosomal subunit protein uL16 (136 aa).

The segment covering 1 to 17 (MLQPKRTKFRKRHKGRN) has biased composition (basic residues). Residues 1-21 (MLQPKRTKFRKRHKGRNRGLA) form a disordered region.

The protein belongs to the universal ribosomal protein uL16 family. In terms of assembly, part of the 50S ribosomal subunit.

Binds 23S rRNA and is also seen to make contacts with the A and possibly P site tRNAs. In Buchnera aphidicola subsp. Acyrthosiphon kondoi (Acyrthosiphon kondoi symbiotic bacterium), this protein is Large ribosomal subunit protein uL16.